The sequence spans 348 residues: LIM domain-containing protein unc-97 (348 aa).

LIM zinc-binding domains follow at residues 21-73, 82-132, 146-196, 205-255, and 264-315; these read CVRC…CEHD, CGKC…CREC, CHKC…CLRC, CGAC…CEQH, and CFKC…CKRC.

Interacts with unc-98. Component of an integrin containing attachment complex, composed of at least pat-2, pat-3, pat-4, pat-6, unc-52, unc-97 and unc-112. Restricted to tissue types that attach to the hypodermis, specifically body wall muscles, vulval muscles, and mechanosensory neurons.

The protein localises to the cell junction. The protein resides in the adherens junction. It localises to the nucleus. Component of an integrin containing attachment complex, which is required for muscle development and maintenance. Probably function in adherens junction. Affects the structural integrity of the integrin containing muscle adherens junctions and contributes to the mechanosensory functions of touch neurons. In Caenorhabditis elegans, this protein is LIM domain-containing protein unc-97.